Consider the following 241-residue polypeptide: Small ribosomal subunit protein uS3 (241 aa).

The 69-residue stretch at 39 to 107 (IRTYLKKELY…PLSVNIKEEK (69 aa)) folds into the KH type-2 domain. Residues 214 to 241 (AEVKEEQQKEGARRPKRAPKRENSGKAE) form a disordered region. Residues 215-226 (EVKEEQQKEGAR) show a composition bias toward basic and acidic residues.

The protein belongs to the universal ribosomal protein uS3 family. Part of the 30S ribosomal subunit. Forms a tight complex with proteins S10 and S14.

In terms of biological role, binds the lower part of the 30S subunit head. Binds mRNA in the 70S ribosome, positioning it for translation. The polypeptide is Small ribosomal subunit protein uS3 (Sulfurimonas denitrificans (strain ATCC 33889 / DSM 1251) (Thiomicrospira denitrificans (strain ATCC 33889 / DSM 1251))).